We begin with the raw amino-acid sequence, 437 residues long: Phosphomethylpyrimidine synthase (437 aa).

Residues Asn69, Met98, Tyr127, His163, 185–187 (SRG), 226–229 (DACR), and Glu265 contribute to the substrate site. His269 provides a ligand contact to Zn(2+). Substrate is bound at residue Tyr292. His333 provides a ligand contact to Zn(2+). [4Fe-4S] cluster contacts are provided by Cys409, Cys412, and Cys416.

This sequence belongs to the ThiC family. It depends on [4Fe-4S] cluster as a cofactor.

It carries out the reaction 5-amino-1-(5-phospho-beta-D-ribosyl)imidazole + S-adenosyl-L-methionine = 4-amino-2-methyl-5-(phosphooxymethyl)pyrimidine + CO + 5'-deoxyadenosine + formate + L-methionine + 3 H(+). The protein operates within cofactor biosynthesis; thiamine diphosphate biosynthesis. Catalyzes the synthesis of the hydroxymethylpyrimidine phosphate (HMP-P) moiety of thiamine from aminoimidazole ribotide (AIR) in a radical S-adenosyl-L-methionine (SAM)-dependent reaction. The chain is Phosphomethylpyrimidine synthase from Clostridium botulinum (strain ATCC 19397 / Type A).